A 635-amino-acid chain; its full sequence is 1-deoxy-D-xylulose-5-phosphate synthase (635 aa).

Thiamine diphosphate-binding positions include H74 and 115-117 (AHS). D146 contacts Mg(2+). Thiamine diphosphate is bound by residues 147 to 148 (GA), N176, Y283, and E365. N176 serves as a coordination point for Mg(2+).

The protein belongs to the transketolase family. DXPS subfamily. As to quaternary structure, homodimer. Mg(2+) is required as a cofactor. Requires thiamine diphosphate as cofactor.

It catalyses the reaction D-glyceraldehyde 3-phosphate + pyruvate + H(+) = 1-deoxy-D-xylulose 5-phosphate + CO2. It participates in metabolic intermediate biosynthesis; 1-deoxy-D-xylulose 5-phosphate biosynthesis; 1-deoxy-D-xylulose 5-phosphate from D-glyceraldehyde 3-phosphate and pyruvate: step 1/1. In terms of biological role, catalyzes the acyloin condensation reaction between C atoms 2 and 3 of pyruvate and glyceraldehyde 3-phosphate to yield 1-deoxy-D-xylulose-5-phosphate (DXP). This is 1-deoxy-D-xylulose-5-phosphate synthase from Paraburkholderia xenovorans (strain LB400).